The sequence spans 129 residues: Photosystem II reaction center Psb28 protein (129 aa).

The disordered stretch occupies residues 110 to 129 (GLGYSNNSGNNEGADEASEG).

It belongs to the Psb28 family. Part of the photosystem II complex.

It localises to the cellular thylakoid membrane. This chain is Photosystem II reaction center Psb28 protein, found in Synechococcus sp. (strain WH7803).